Here is a 446-residue protein sequence, read N- to C-terminus: MPKRTFTKDDIRKFAEEENVRYLRLQFTDILGTIKNVEVPVSQLEKVLDNEMMFDGSSIEGFVRIEESDMYLHPDLDTWVIFPWTAGQGKVARLICDVYKTDGTPFEGDPRANLKRVLKEMEDLGFTDFNLGPEPEFFLFKLDEKGEPTLELNDDGGYFDLAPTDLGENCRRDIVLELEDMGFDIEASHHEVAPGQHEIDFKYADAVTACDNIQTFKLVVKTIARKHNLHATFMPKPLFGVNGSGMHFNVSLFKGKENAFFDPNTEMGLTETAYQFTAGVLKNARGFTAVCNPLVNSYKRLVPGYEAPCYIAWSGKNRSPLIRVPSSRGLSTRIEVRSVDPAANPYMALAAILEAGLDGIKNKLKVPEPVNQNIYEMNREEREAVGIQDLPSTLYTALKAMRENEVIKKALGNHIYNQFINSKSIEWDYYRTQVSEWERDQYMKQY.

The GS beta-grasp domain maps to 18–103 (ENVRYLRLQF…LICDVYKTDG (86 aa)). The GS catalytic domain occupies 110–446 (PRANLKRVLK…WERDQYMKQY (337 aa)). Residues Glu134 and Glu136 each contribute to the Mg(2+) site. Glu186 is an ATP binding site. The Mg(2+) site is built by Glu191 and Glu198. L-glutamate-binding positions include 242-243 (NG) and Gly243. Mg(2+) is bound at residue His247. Ser251 is a binding site for ATP. Positions 300, 306, and 318 each coordinate L-glutamate. Residues Arg318 and Arg323 each coordinate ATP. A Mg(2+)-binding site is contributed by Glu335. L-glutamate is bound at residue Arg337.

This sequence belongs to the glutamine synthetase family. Oligomer of 12 subunits arranged in the form of two hexagons. In its feedback-inhibited form, interacts with TnrA in order to block its DNA-binding activity. The cofactor is Mg(2+).

Its subcellular location is the cytoplasm. The catalysed reaction is L-glutamate + NH4(+) + ATP = L-glutamine + ADP + phosphate + H(+). With respect to regulation, inhibited by glutamine. Glutamine synthetase (GS) is an unusual multitasking protein that functions as an enzyme, a transcription coregulator, and a chaperone in ammonium assimilation and in the regulation of genes involved in nitrogen metabolism. It catalyzes the ATP-dependent biosynthesis of glutamine from glutamate and ammonia. Feedback-inhibited GlnA also interacts with and regulates the activity of the transcriptional regulator TnrA. During nitrogen limitation, TnrA is in its DNA-binding active state and turns on the transcription of genes required for nitrogen assimilation. Under conditions of nitrogen excess, feedback-inhibited GlnA forms a stable complex with TnrA, which inhibits its DNA-binding activity. In contrast, feedback-inhibited GlnA acts as a chaperone to stabilize the DNA-binding activity of GlnR, which represses the transcription of nitrogen assimilation genes. This chain is Glutamine synthetase, found in Staphylococcus aureus (strain MSSA476).